Reading from the N-terminus, the 83-residue chain is MRLFLSLPVLVVVLSMVLEGPAPAQGAPDVSSALDKLKEFGNTLEDKAWEVINRIKQSEFPAKTRDWFSETFRKVKEKLKINS.

The signal sequence occupies residues 1–26 (MRLFLSLPVLVVVLSMVLEGPAPAQG).

This sequence belongs to the apolipoprotein C1 family.

The protein localises to the secreted. In terms of biological role, inhibitor of lipoprotein binding to the low density lipoprotein (LDL) receptor, LDL receptor-related protein, and very low density lipoprotein (VLDL) receptor. Associates with high density lipoproteins (HDL) and the triacylglycerol-rich lipoproteins in the plasma and makes up about 10% of the protein of the VLDL and 2% of that of HDL. Appears to interfere directly with fatty acid uptake and is also the major plasma inhibitor of cholesteryl ester transfer protein (CETP). Binds free fatty acids and reduces their intracellular esterification. Modulates the interaction of APOE with beta-migrating VLDL and inhibits binding of beta-VLDL to the LDL receptor-related protein. This Cercocebus atys (Sooty mangabey) protein is Apolipoprotein C-I, basic form (APOC1B).